The sequence spans 548 residues: Natural resistance-associated macrophage protein 1 (548 aa).

The interval 1–38 (MSGDTGPPKQGGTRYGSISSPPSPEPQQAPPGGTYLSE) is disordered. The Cytoplasmic segment spans residues 1 to 55 (MSGDTGPPKQGGTRYGSISSPPSPEPQQAPPGGTYLSEKIPIPDTESGTFSLRKL). A helical transmembrane segment spans residues 56-73 (WAFTGPGFLMSIAFLDPG). Residues 74–82 (NIESDLQAG) lie on the Extracellular side of the membrane. Residues 83–102 (AVAGFKLLWVLLWATVLGLL) form a helical membrane-spanning segment. Over 103–139 (CQRLAARLGVVTGKDLGEVCHLYYPKVPRILLWLTIE) the chain is Cytoplasmic. A helical membrane pass occupies residues 140–160 (LAIVGSDMQEVIGTAIAFSLL). Topologically, residues 161–164 (SAGR) are extracellular. Residues 165-184 (IPLWGGVLITVVDTFFFLFL) form a helical membrane-spanning segment. The Cytoplasmic portion of the chain corresponds to 185–193 (DNYGLRKLE). Residues 194–214 (AFFGFLITIMALTFGYEYVVA) form a helical membrane-spanning segment. Over 215-237 (QPAQGALLQGLFLPSCPGCGQPE) the chain is Extracellular. A helical membrane pass occupies residues 238–256 (LLQAVGIIGAIIMPHNIYL). The Cytoplasmic segment spans residues 257-284 (HSSLVKSREVDRSRRADIREANMYFLIE). A helical transmembrane segment spans residues 285–304 (ATIALSVSFLINLFVMAVFG). Residues 305–346 (QAFYKQTNQAAFNICADSSLHDYAPIFPRNNLTVAVDIYQGG) lie on the Extracellular side of the membrane. Asparagine 335 carries an N-linked (GlcNAc...) asparagine glycan. Residues 347–366 (VILGCLFGPPALYIWAVGLL) form a helical membrane-spanning segment. The Cytoplasmic portion of the chain corresponds to 367 to 397 (AAGQSSTMTGTYAGQFVMEGFLKLRWSRFAR). A helical membrane pass occupies residues 398 to 415 (VLLTRSCAILPTVLLAVF). Residues 416–426 (RDLRDLSGLND) are Extracellular-facing. The chain crosses the membrane as a helical span at residues 427 to 447 (LLNVLQSLLLPFAVLPILTFT). Residues 448 to 463 (SMPALMQEFANGLVSK) lie on the Cytoplasmic side of the membrane. The chain crosses the membrane as a helical span at residues 464 to 485 (VITSSIMVLVCAVNLYFVISYL). At 486 to 493 (PSLPHPAY) the chain is on the extracellular side. Residues 494–513 (FSLVALLAAAYLGLTTYLVW) traverse the membrane as a helical segment. The Cytoplasmic portion of the chain corresponds to 514–548 (TCLITQGATLLAHSSHQRFLYGLPEEDQEKGRTSG).

Belongs to the NRAMP family.

Its subcellular location is the late endosome membrane. The protein localises to the lysosome membrane. The catalysed reaction is Zn(2+)(in) + H(+)(out) = Zn(2+)(out) + H(+)(in). The enzyme catalyses Fe(2+)(in) + H(+)(out) = Fe(2+)(out) + H(+)(in). It catalyses the reaction Mn(2+)(in) + H(+)(out) = Mn(2+)(out) + H(+)(in). Functionally, macrophage-specific antiporter that fluxes metal ions in either direction against a proton gradient. Localized to late endosomal lysosomal membranes, delivers bivalent cations from the cytosol into these acidic compartments where they may directly affect antimicrobial activity. Involved in iron metabolism and host natural resistance to infection with intracellular parasites. Pathogen resistance involves sequestration of Fe(2+) and Mn(2+), cofactors of both prokaryotic and eukaryotic catalases and superoxide dismutases, not only to protect the macrophage against its own generation of reactive oxygen species, but to deny the cations to the pathogen for synthesis of its protective enzymes. This is Natural resistance-associated macrophage protein 1 (SLC11A1) from Bos taurus (Bovine).